Reading from the N-terminus, the 1038-residue chain is Dorsal-ventral patterning protein Sog (1038 aa).

The Cytoplasmic portion of the chain corresponds to 1-53 (MANKLRKSNAIEWATATGTVPLLERSCCHSEDAALEPQASKTSHREQAPILRH). The helical; Signal-anchor for type II membrane protein transmembrane segment at 54-74 (LSQLSHLLIIAGLLIVCLAGV) threads the bilayer. The Extracellular segment spans residues 75–1038 (TEGRRHAPLM…QPHHQQRSSS (964 aa)). The VWFC 1 domain occupies 100 to 175 (TECQFGKVLR…LPGKCCKTCP (76 aa)). Residues Asn179 and Asn287 are each glycosylated (N-linked (GlcNAc...) asparagine). CHRD domains lie at 197-337 (NMKH…KYTA), 339-471 (QTEL…TRAS), 474-588 (IFQT…PRPV), and 592-713 (RDSA…STKV). N-linked (GlcNAc...) asparagine glycosylation is found at Asn520, Asn666, Asn752, and Asn821. A VWFC 2 domain is found at 742 to 804 (TKCFHSGRFY…RDGECCPSCV (63 aa)). VWFC domains lie at 830–899 (RGCR…KICP) and 939–1020 (GGCK…TQCR).

This sequence belongs to the chordin family. Component of a complex composed of dpp, sog and tsg. Interacts with palmitoyltransferase Hip14. Post-translationally, palmitoylated, probably by Hip14. Cleaved by metalloproteases tok and tld. Cleavage by tok during pupal development contributes to specification of the posterior crossvein in the wing. In terms of tissue distribution, abuts the dorsal dpp-expressing cells in a lateral stripe 14-16 cells wide. Later in embryogenesis it is expressed in neuroectoderm and in the endoderm spaced along the anterior-posterior axis of the developing gut.

It is found in the golgi apparatus membrane. The protein resides in the cell membrane. It localises to the secreted. Putative negative growth factor. Antagonist of dpp, a protein involved in patterning the dorsal region and in the development of the neuroectoderm; dpp inhibition is enhanced by tsg. Required for establishment of a narrow stripe of peak levels of BMP signaling in the dorsal midline of early embryos, that will give rise to the amnioserosa. During pupal development, plays a role in specification of the posterior crossvein in the wing. Exhibits both agonist and antagonist activities towards BMP signaling during pupal wing patterning. The sequence is that of Dorsal-ventral patterning protein Sog (sog) from Drosophila melanogaster (Fruit fly).